The primary structure comprises 80 residues: Putative UPF0377 protein YMR324C (80 aa).

A helical membrane pass occupies residues 13–33; that stretch reads ACIFIDSVCEGIVFWGLCLFV.

The protein belongs to the UPF0377 family.

The protein localises to the membrane. The chain is Putative UPF0377 protein YMR324C from Saccharomyces cerevisiae (strain ATCC 204508 / S288c) (Baker's yeast).